The sequence spans 282 residues: Ribonuclease P protein subunit p38 (282 aa).

Disordered stretches follow at residues 1–21 (MAAAPQAPGRGSVRKTRPLPV) and 61–103 (EDRK…QASG). At A2 the chain carries N-acetylalanine. S12 carries the phosphoserine modification. Over residues 88–97 (EDLKKEKPKG) the composition is skewed to basic and acidic residues. 2 positions are modified to phosphoserine: S226 and S235. The tract at residues 262–282 (KLIPNPNKIRKPPKSKRTASK) is disordered. Basic residues predominate over residues 269–282 (KIRKPPKSKRTASK).

The protein belongs to the eukaryotic ribosomal protein eL8 family. Component of nuclear RNase P and RNase MRP ribonucleoproteins. RNase P consists of a catalytic RNA moiety and about 10 protein subunits; POP1, POP4, POP5, POP7, RPP14, RPP21, RPP25, RPP30, RPP38 and RPP40. Within the RNase P complex, POP1, POP7 and RPP25 form the 'finger' subcomplex, POP5, RPP14, RPP40 and homodimeric RPP30 form the 'palm' subcomplex, and RPP21, POP4 and RPP38 form the 'wrist' subcomplex. All subunits of the RNase P complex interact with the catalytic RNA. Several subunits of RNase P are also part of the RNase MRP complex. RNase MRP consists of a catalytic RNA moiety and about 8 protein subunits; POP1, POP7, RPP25, RPP30, RPP38, RPP40 and possibly also POP4 and POP5.

Its subcellular location is the nucleus. The protein resides in the nucleolus. Its function is as follows. Component of ribonuclease P, a ribonucleoprotein complex that generates mature tRNA molecules by cleaving their 5'-ends. Also a component of the MRP ribonuclease complex, which cleaves pre-rRNA sequences. The protein is Ribonuclease P protein subunit p38 (RPP38) of Bos taurus (Bovine).